A 255-amino-acid chain; its full sequence is Pre-miRNA 5'-monophosphate methyltransferase (255 aa).

Residues R32, N66, D96, 121–122, and M150 contribute to the S-adenosyl-L-methionine site; that span reads DI. Positions 41 to 253 constitute a Bin3-type SAM domain; it reads LHKLFRKPAE…SLLLFKIQRH (213 aa).

Belongs to the methyltransferase superfamily.

Its subcellular location is the cytoplasm. The enzyme catalyses a 5'-end 5'-phospho-ribonucleoside-RNA + S-adenosyl-L-methionine = a 5'-end (5'-methylphospho)-ribonucleoside-RNA + S-adenosyl-L-homocysteine. The catalysed reaction is a 5'-end 5'-phospho-ribonucleoside-RNA + 2 S-adenosyl-L-methionine = a 5'-end (5'-bismethylphospho)-ribonucleoside-RNA + 2 S-adenosyl-L-homocysteine. Its function is as follows. O-methyltransferase that specifically monomethylates 5'-monophosphate of cytoplasmic histidyl tRNA (tRNA(His)), acting as a capping enzyme by protecting tRNA(His) from cleavage by DICER1. Also able, with less efficiently, to methylate the 5' monophosphate of a subset of pre-miRNAs, acting as a negative regulator of miRNA processing. The 5' monophosphate of pre-miRNAs is recognized by DICER1 and is required for pre-miRNAs processing: methylation at this position reduces the processing of pre-miRNAs by DICER1. Was also reported to mediate dimethylation of pre-miR-145; however dimethylation cannot be reproduced by another group which observes a monomethylation of pre-miR-145. The protein is Pre-miRNA 5'-monophosphate methyltransferase (bcdin3d) of Xenopus laevis (African clawed frog).